The chain runs to 362 residues: Putative F-box protein At3g25750 (362 aa).

In terms of domain architecture, F-box spans 4 to 52; sequence TEWSDLPEELLDLIANRYSSNIDVLRIRSTCKSWRSAVAMSKERLQFRF.

This chain is Putative F-box protein At3g25750, found in Arabidopsis thaliana (Mouse-ear cress).